The following is a 354-amino-acid chain: Phospho-N-acetylmuramoyl-pentapeptide-transferase (354 aa).

10 helical membrane passes run 23 to 43 (FSFFIAFCLTVYLMPKFIAWA), 66 to 86 (TPTMGGLVFIGAAVFATLLCA), 88 to 108 (LDNVFVVASLLCLVGFSALGF), 130 to 150 (LAVQVLIGLVVSSLLYFHGEL), 161 to 181 (FALLDLGVFAIVFWTIVIVAA), 193 to 213 (GLASVPAIFSLLTLGVFAYIC), 230 to 250 (VGETVIIAAALIGSLMGFLWF), 257 to 277 (VFMGDSGSLSVGAYIGLMGVM), 282 to 302 (ILLIIIGFVFVMETLSVILQV), and 331 to 351 (KIIVRFWLIAILANLIALTAL).

Belongs to the glycosyltransferase 4 family. MraY subfamily. Mg(2+) serves as cofactor.

The protein localises to the cell inner membrane. The catalysed reaction is UDP-N-acetyl-alpha-D-muramoyl-L-alanyl-gamma-D-glutamyl-meso-2,6-diaminopimeloyl-D-alanyl-D-alanine + di-trans,octa-cis-undecaprenyl phosphate = di-trans,octa-cis-undecaprenyl diphospho-N-acetyl-alpha-D-muramoyl-L-alanyl-D-glutamyl-meso-2,6-diaminopimeloyl-D-alanyl-D-alanine + UMP. It participates in cell wall biogenesis; peptidoglycan biosynthesis. Catalyzes the initial step of the lipid cycle reactions in the biosynthesis of the cell wall peptidoglycan: transfers peptidoglycan precursor phospho-MurNAc-pentapeptide from UDP-MurNAc-pentapeptide onto the lipid carrier undecaprenyl phosphate, yielding undecaprenyl-pyrophosphoryl-MurNAc-pentapeptide, known as lipid I. The chain is Phospho-N-acetylmuramoyl-pentapeptide-transferase from Campylobacter curvus (strain 525.92).